Consider the following 243-residue polypeptide: Linker for activation of T-cells family member 2 (243 aa).

Topologically, residues 1–5 (MSSGT) are extracellular. Residues 6 to 26 (ELLWPGAALLVLLGVAASLCV) form a helical; Signal-anchor for type III membrane protein membrane-spanning segment. 2 S-palmitoyl cysteine lipidation sites follow: cysteine 25 and cysteine 28. The Cytoplasmic segment spans residues 27 to 243 (RCSRPGAKRS…VNGEVAATEA (217 aa)). Serine 44 carries the phosphoserine modification. Tyrosine 58 is subject to Phosphotyrosine. Serine 59 and serine 92 each carry phosphoserine. A phosphotyrosine mark is found at tyrosine 136, tyrosine 193, and tyrosine 233. The tract at residues 174 to 243 (PTSGLCPSAS…VNGEVAATEA (70 aa)) is disordered.

In terms of assembly, when phosphorylated, interacts with GRB2. May also interact with SOS1, GAB1 and CBL. In terms of processing, phosphorylated on tyrosines following cross-linking of BCR in B-cells, FCGR1 in myeloid cells, or FCER1 in mast cells; which induces the recruitment of GRB2. Post-translationally, may be polyubiquitinated. As to expression, highly expressed in spleen, peripheral blood lymphocytes, and germinal centers of lymph nodes. Also expressed in placenta, lung, pancreas and small intestine. Present in B-cells, NK cells and monocytes. Absent from T-cells (at protein level).

The protein resides in the cell membrane. Functionally, involved in FCER1 (high affinity immunoglobulin epsilon receptor)-mediated signaling in mast cells. May also be involved in BCR (B-cell antigen receptor)-mediated signaling in B-cells and FCGR1 (high affinity immunoglobulin gamma Fc receptor I)-mediated signaling in myeloid cells. Couples activation of these receptors and their associated kinases with distal intracellular events through the recruitment of GRB2. The protein is Linker for activation of T-cells family member 2 (LAT2) of Homo sapiens (Human).